A 101-amino-acid chain; its full sequence is Small ribosomal subunit protein uS14 (101 aa).

It belongs to the universal ribosomal protein uS14 family. As to quaternary structure, part of the 30S ribosomal subunit. Contacts proteins S3 and S10.

In terms of biological role, binds 16S rRNA, required for the assembly of 30S particles and may also be responsible for determining the conformation of the 16S rRNA at the A site. In Caulobacter sp. (strain K31), this protein is Small ribosomal subunit protein uS14.